Here is a 218-residue protein sequence, read N- to C-terminus: Ras-related protein RabT2 (218 aa).

32–39 (GDYKTGKG) contributes to the GTP binding site. The Effector region signature appears at 54–61 (VSSIGVDF). Residues 80-84 (DANSC) and 140-143 (NKCD) contribute to the GTP site. Cysteine 215 carries the post-translational modification Cysteine methyl ester. Cysteine 215 carries the S-geranylgeranyl cysteine lipid modification. Positions 216–218 (NIL) are cleaved as a propeptide — removed in mature form.

This sequence belongs to the small GTPase superfamily. Rab family.

It localises to the cell membrane. In Dictyostelium discoideum (Social amoeba), this protein is Ras-related protein RabT2 (rabT2).